A 129-amino-acid polypeptide reads, in one-letter code: Putative CC-type chemokine FPV061 (129 aa).

This sequence belongs to the intercrine beta (chemokine CC) family. Highly divergent.

In Fowlpox virus (strain NVSL) (FPV), this protein is Putative CC-type chemokine FPV061.